Reading from the N-terminus, the 533-residue chain is Putative sel1-like repeat-containing protein L21 (533 aa).

5 Sel1-like repeats span residues 105–140 (VLSQNNLGFMYEEGIGTEIKINKAKMWYTLSANQGL), 141–172 (SFAQYNLGYYYYNKAKYEKSINYFQKSAQSGY), 173–206 (YLSNFMLAETYLKLSIPNFNEAIKNYLLAANQGC), 207–242 (NISQYRLGMIYFEGKYVNTDMNQAYKWFKLSAKQGN), and 243–278 (YFSQYGLGRVYYSMDSTKYNCQKAINCFIKSANCGH).

This is Putative sel1-like repeat-containing protein L21 from Acanthamoeba polyphaga mimivirus (APMV).